The sequence spans 25 residues: QSERFEQQMQGQDFSHDERFLSQAA.

Residues 1–25 (QSERFEQQMQGQDFSHDERFLSQAA) are disordered. The segment covering 14 to 25 (FSHDERFLSQAA) has biased composition (basic and acidic residues).

The protein belongs to the 2S seed storage albumins family. Expressed in seed (at protein level). Not detected in pulp, stems and leaves.

Has strong antifungal activity against T.harzianum, F.oxysporum and A.fumigatus with IC(50) values of 32 ug/ml, 34 ug/ml and 40 ug/ml, restectively. Lacks antifungal activity against R.solani, P.brasiliensis and C.albicans. The chain is Antifungal protein 1 from Passiflora edulis (Passion fruit).